Reading from the N-terminus, the 48-residue chain is Large ribosomal subunit protein bL33B (48 aa).

This sequence belongs to the bacterial ribosomal protein bL33 family.

The polypeptide is Large ribosomal subunit protein bL33B (rpmG 2) (Mycoplasmoides gallisepticum (strain R(low / passage 15 / clone 2)) (Mycoplasma gallisepticum)).